A 155-amino-acid chain; its full sequence is Large ribosomal subunit protein uL22c (155 aa).

The protein belongs to the universal ribosomal protein uL22 family. As to quaternary structure, part of the 50S ribosomal subunit.

It localises to the plastid. The protein resides in the chloroplast. This protein binds specifically to 23S rRNA. Its function is as follows. The globular domain of the protein is located near the polypeptide exit tunnel on the outside of the subunit, while an extended beta-hairpin is found that lines the wall of the exit tunnel in the center of the 70S ribosome. The chain is Large ribosomal subunit protein uL22c (rpl22) from Nicotiana sylvestris (Wood tobacco).